Consider the following 223-residue polypeptide: TMF-regulated nuclear protein 1 (223 aa).

Disordered regions lie at residues 1–84 and 196–223; these read MPGC…GPAG and GRLR…SPQR. Residues 21-54 show a composition bias toward pro residues; that stretch reads GSPPPPPREPLPSLQPPSPSPTSTPTPTKSPPLP. Positions 73-84 are enriched in gly residues; that stretch reads ASGGSGGAGPAG.

Interacts with TMF1; may regulate TRNP1 proteasomal degradation. Ubiquitinated, leading to its degradation by the proteasome. As to expression, expressed in brain and kidney (at protein level). Also detected in spleen and intestine.

The protein resides in the nucleus. DNA-binding factor that regulates the expression of a subset of genes and plays a key role in tangential, radial, and lateral expansion of the brain neocortex. Regulates neural stem cells proliferation and the production of intermediate neural progenitors and basal radial glial cells affecting the process of cerebral cortex gyrification. May control the proliferation rate of cells by regulating their progression through key cell-cycle transition points. The sequence is that of TMF-regulated nuclear protein 1 (Trnp1) from Mus musculus (Mouse).